A 384-amino-acid polypeptide reads, in one-letter code: Putative pectate lyase 2 (384 aa).

An N-terminal signal peptide occupies residues 1-23; sequence MASLFLTIISLLFAAFSSSVVEA. Positions 182, 206, and 210 each coordinate Ca(2+). Arginine 262 is an active-site residue.

It belongs to the polysaccharide lyase 1 family. The cofactor is Ca(2+).

It carries out the reaction Eliminative cleavage of (1-&gt;4)-alpha-D-galacturonan to give oligosaccharides with 4-deoxy-alpha-D-galact-4-enuronosyl groups at their non-reducing ends.. Its pathway is glycan metabolism; pectin degradation; 2-dehydro-3-deoxy-D-gluconate from pectin: step 2/5. This is Putative pectate lyase 2 from Arabidopsis thaliana (Mouse-ear cress).